The following is a 124-amino-acid chain: SLLQFETLIMKVAKKSGMVWYSNYGCYCGWGGQGRPQDATDRCCFVHDCCYGKVTGCDPKMDVYSFSEENGDIVCGGDDPCKKEICECDRAAAICFRDNLNTYNDKKYWAFGAKNCPQEESEPC.

7 disulfides stabilise this stretch: Cys26–Cys116, Cys28–Cys44, Cys43–Cys95, Cys49–Cys124, Cys50–Cys88, Cys57–Cys81, and Cys75–Cys86. The Ca(2+) site is built by Tyr27, Gly29, and Gly31. Residue His47 is part of the active site. Asp48 is a Ca(2+) binding site. The active site involves Asp89.

Belongs to the phospholipase A2 family. Group II subfamily. D49 sub-subfamily. Ca(2+) is required as a cofactor. As to expression, expressed by the venom gland.

It is found in the secreted. It carries out the reaction a 1,2-diacyl-sn-glycero-3-phosphocholine + H2O = a 1-acyl-sn-glycero-3-phosphocholine + a fatty acid + H(+). Functionally, PLA2 catalyzes the calcium-dependent hydrolysis of the 2-acyl groups in 3-sn-phosphoglycerides. The protein is Acidic phospholipase A2 A of Gloydius halys (Chinese water mocassin).